The sequence spans 208 residues: Holliday junction branch migration complex subunit RuvA (208 aa).

The interval 1-63 (MIGMLTGRVE…QDAITLHGFL (63 aa)) is domain I. Residues 64–142 (DRDAKKTFLQ…LSQIEGASAQ (79 aa)) are domain II. Positions 143 to 151 (AATSKSPVD) are flexible linker. Positions 151–208 (DTGTEQVVEGLISLGWRQQDAQQAVAEACAENDIPTPLATDDVPRVLRLALALMDRGR) are domain III.

The protein belongs to the RuvA family. Homotetramer. Forms an RuvA(8)-RuvB(12)-Holliday junction (HJ) complex. HJ DNA is sandwiched between 2 RuvA tetramers; dsDNA enters through RuvA and exits via RuvB. An RuvB hexamer assembles on each DNA strand where it exits the tetramer. Each RuvB hexamer is contacted by two RuvA subunits (via domain III) on 2 adjacent RuvB subunits; this complex drives branch migration. In the full resolvosome a probable DNA-RuvA(4)-RuvB(12)-RuvC(2) complex forms which resolves the HJ.

It is found in the cytoplasm. Its function is as follows. The RuvA-RuvB-RuvC complex processes Holliday junction (HJ) DNA during genetic recombination and DNA repair, while the RuvA-RuvB complex plays an important role in the rescue of blocked DNA replication forks via replication fork reversal (RFR). RuvA specifically binds to HJ cruciform DNA, conferring on it an open structure. The RuvB hexamer acts as an ATP-dependent pump, pulling dsDNA into and through the RuvAB complex. HJ branch migration allows RuvC to scan DNA until it finds its consensus sequence, where it cleaves and resolves the cruciform DNA. This is Holliday junction branch migration complex subunit RuvA from Bifidobacterium longum (strain DJO10A).